A 431-amino-acid chain; its full sequence is Histidinol dehydrogenase (431 aa).

Positions 124, 187, and 210 each coordinate NAD(+). Ser-236, Gln-258, and His-261 together coordinate substrate. Zn(2+) contacts are provided by Gln-258 and His-261. Catalysis depends on proton acceptor residues Glu-325 and His-326. 4 residues coordinate substrate: His-326, Asp-359, Glu-413, and His-418. Position 359 (Asp-359) interacts with Zn(2+). Residue His-418 coordinates Zn(2+).

This sequence belongs to the histidinol dehydrogenase family. Zn(2+) serves as cofactor.

The enzyme catalyses L-histidinol + 2 NAD(+) + H2O = L-histidine + 2 NADH + 3 H(+). Its pathway is amino-acid biosynthesis; L-histidine biosynthesis; L-histidine from 5-phospho-alpha-D-ribose 1-diphosphate: step 9/9. Catalyzes the sequential NAD-dependent oxidations of L-histidinol to L-histidinaldehyde and then to L-histidine. In Legionella pneumophila subsp. pneumophila (strain Philadelphia 1 / ATCC 33152 / DSM 7513), this protein is Histidinol dehydrogenase.